The chain runs to 293 residues: MTENNDIKMVIITGMSGAGKTVALQSFEDLGYFCVDNLPPMLLPKFIELMADSKGKMNKVALGVDLRGREFFEHLWGALDDLSERTWIIPHILFLDAKDSTLVTRYKETRRSHPLAPTGLPLKGIEIERSLLTDMKARANIVLDTSDLKPKELREKIVHLFSTETEQAFRVNVMSFGFKYGIPIDADLVFDVRFLPNPYYIPHMKPLTGLDEEVSSYVLKFNETHKFLEKLTDLITFMLPHYKREGKSQLVIAIGCTGGQHRSVTLTEYLGKHLKPEYSVHVSHRDVEKRKGH.

14 to 21 (GMSGAGKT) is a binding site for ATP. 65–68 (DLRG) is a GTP binding site.

Belongs to the RapZ-like family.

Functionally, displays ATPase and GTPase activities. The chain is Nucleotide-binding protein BA_5384/GBAA_5384/BAS5004 from Bacillus anthracis.